Here is an 824-residue protein sequence, read N- to C-terminus: MSAPSEEEEYARLVMEAQPEWLRAEVKRLSHELAETTREKIQAAEYGLAVLEEKHQLKLQFEELEVDYEAIRSEMEQLKEAFGQAHTNHKKVAADGESREESLIQESASKEQYYVRKVLELQTELKQLRNVLTNTQSENERLASVAQELKEINQNVEIQRGRLRDDIKEYKFREARLLQDYSELEEENISLQKQVSVLRQNQVEFEGLKHEIKRLEEETEYLNSQLEDAIRLKEISERQLEEALETLKTEREQKNSLRKELSHYMSINDSFYTSHLHVSLDGLKFSDDAAEPNNDAEALVNGFEHGGLAKLPLDNKTSTPKKEGLAPPSPSLVSDLLSELNISEIQKLKQQLMQMEREKAGLLATLQDTQKQLEHTRGSLSEQQEKVTRLTENLSALRRLQASKERQTALDNEKDRDSHEDGDYYEVDINGPEILACKYHVAVAEAGELREQLKALRSTHEAREAQHAEEKGRYEAEGQALTEKVSLLEKASRQDRELLARLEKELKKVSDVAGETQGSLSVAQDELVTFSEELANLYHHVCMCNNETPNRVMLDYYREGQGGAGRTSPGGRTSPEARGRRSPILLPKGLLAPEAGRADGGTGDSSPSPGSSLPSPLSDPRREPMNIYNLIAIIRDQIKHLQAAVDRTTELSRQRIASQELGPAVDKDKEALMEEILKLKSLLSTKREQITTLRTVLKANKQTAEVALANLKSKYENEKAMVTETMMKLRNELKALKEDAATFSSLRAMFATRCDEYITQLDEMQRQLAAAEDEKKTLNSLLRMAIQQKLALTQRLELLELDHEQTRRGRAKAAPKTKPATPSL.

Ser-2 is modified (N-acetylserine). The stretch at Glu-20–Asp-269 forms a coiled coil. The tract at residues Glu-25–Arg-398 is interacts with DYNLL1, DYNC1H1, DYNC1I2, DCTN1 and DCTN2. Phosphoserine is present on residues Ser-190, Ser-224, and Ser-318. Positions Leu-311 to Pro-330 are disordered. Thr-319 is modified (phosphothreonine). Positions Ser-334–Asp-599 are interaction with KIF5A. Residues Ser-338–Leu-537 adopt a coiled-coil conformation. Phosphoserine is present on residues Ser-343 and Ser-395. Disordered regions lie at residues Arg-398–Tyr-425, Glu-559–Arg-622, and Glu-804–Leu-824. The span at Ala-402 to Gly-422 shows a compositional bias: basic and acidic residues. Phosphoserine is present on residues Ser-568, Ser-574, and Ser-582. Residues Leu-590–Leu-824 form an interaction with RANBP2 region. Thr-602 is modified (phosphothreonine). Residues Asp-604–Ser-618 are compositionally biased toward low complexity. A coiled-coil region spans residues Asp-666 to Arg-808. The segment at Asp-666 to Ala-814 is interacts with RAB6A. Thr-821 bears the Phosphothreonine mark. Ser-823 is subject to Phosphoserine.

This sequence belongs to the BicD family. As to quaternary structure, part of a tripartite complex with dynein and dynactin, acts an adapter linking the dynein motor complex and dynactin. Interacts with CPNE4 (via VWFA domain). Interacts with RAB6A. Interacts with NEK9. Interacts with DNAI1. Interacts with DYNC1H1. Interacts with RANBP2. Binds preferentially to tyrosinated microtubules than to detyrosinated microtubules. Interacts with DYNLL1, DYNC1I2; DCTN1, DCTN2 and KIF5A. Interacts with KIF1C. Phosphorylated by NEK9 in vitro. As to expression, ubiquitous.

The protein resides in the golgi apparatus. It localises to the cytoplasm. Its subcellular location is the cytoskeleton. It is found in the nucleus envelope. The protein localises to the nucleus. The protein resides in the nuclear pore complex. Its function is as follows. Acts as an adapter protein linking the dynein motor complex to various cargos and converts dynein from a non-processive to a highly processive motor in the presence of dynactin. Facilitates and stabilizes the interaction between dynein and dynactin and activates dynein processivity (the ability to move along a microtubule for a long distance without falling off the track). Facilitates the binding of RAB6A to the Golgi by stabilizing its GTP-bound form. Regulates coat complex coatomer protein I (COPI)-independent Golgi-endoplasmic reticulum transport via its interaction with RAB6A and recruitment of the dynein-dynactin motor complex. Contributes to nuclear and centrosomal positioning prior to mitotic entry through regulation of both dynein and kinesin-1. During G2 phase of the cell cycle, associates with RANBP2 at the nuclear pores and recruits dynein and dynactin to the nuclear envelope to ensure proper positioning of the nucleus relative to centrosomes prior to the onset of mitosis. The chain is Protein bicaudal D homolog 2 from Homo sapiens (Human).